Reading from the N-terminus, the 511-residue chain is GMP synthase [glutamine-hydrolyzing] (511 aa).

In terms of domain architecture, Glutamine amidotransferase type-1 spans alanine 5–asparagine 195. The Nucleophile role is filled by cysteine 82. Catalysis depends on residues histidine 169 and glutamate 171. A GMPS ATP-PPase domain is found at tryptophan 196–arginine 386. ATP is bound at residue serine 223–leucine 229.

As to quaternary structure, homodimer.

It catalyses the reaction XMP + L-glutamine + ATP + H2O = GMP + L-glutamate + AMP + diphosphate + 2 H(+). It participates in purine metabolism; GMP biosynthesis; GMP from XMP (L-Gln route): step 1/1. Catalyzes the synthesis of GMP from XMP. This is GMP synthase [glutamine-hydrolyzing] (guaA) from Borreliella burgdorferi (strain ATCC 35210 / DSM 4680 / CIP 102532 / B31) (Borrelia burgdorferi).